An 89-amino-acid chain; its full sequence is Small ribosomal subunit protein uS15 (89 aa).

Positions 1–24 (MSLNAEQKSEIVEQFRRSPSDTGS) are disordered. Positions 7 to 19 (QKSEIVEQFRRSP) are enriched in basic and acidic residues.

The protein belongs to the universal ribosomal protein uS15 family. In terms of assembly, part of the 30S ribosomal subunit. Forms a bridge to the 50S subunit in the 70S ribosome, contacting the 23S rRNA.

Its function is as follows. One of the primary rRNA binding proteins, it binds directly to 16S rRNA where it helps nucleate assembly of the platform of the 30S subunit by binding and bridging several RNA helices of the 16S rRNA. Functionally, forms an intersubunit bridge (bridge B4) with the 23S rRNA of the 50S subunit in the ribosome. This is Small ribosomal subunit protein uS15 from Halorhodospira halophila (strain DSM 244 / SL1) (Ectothiorhodospira halophila (strain DSM 244 / SL1)).